Reading from the N-terminus, the 500-residue chain is Replicase polyprotein 1ab (500 aa).

The CoV Nsp1 globular domain occupies 54-196 (LVNHVRVDCS…PWSILLRKGG (143 aa)). Positions 352–500 (AFDAIYSETL…MCKCSFKAYF (149 aa)) constitute a Peptidase C16 domain. Catalysis depends on cysteine 389, which acts as the For PL1-PRO activity. The C4-type zinc-finger motif lies at 466-494 (CLKCGMELKLQGLDAVFFYGDVVSHMCKC).

It belongs to the coronaviruses polyprotein 1ab family.

In terms of biological role, the replicase polyprotein of coronaviruses is a multifunctional protein: it contains the activities necessary for the transcription of negative stranded RNA, leader RNA, subgenomic mRNAs and progeny virion RNA as well as proteinases responsible for the cleavage of the polyprotein into functional products. Its function is as follows. The papain-like proteinase 1 (PL1-PRO) is responsible for the cleavages located at the N-terminus of the replicase polyprotein. Activity of PL1-PRO is strongly dependent on zinc. Functionally, non-structural protein 1: binds to the 40S ribosomal subunit and inhibits host translation. The nsp1-40S ribosome complex further induces an endonucleolytic cleavage near the 5'UTR of host mRNAs, targeting them for degradation. By suppressing host gene expression, nsp1 facilitates efficient viral gene expression in infected cells and evasion from host immune response. The chain is Replicase polyprotein 1ab (rep) from Mus musculus (Mouse).